The following is a 92-amino-acid chain: Small ribosomal subunit protein uS19c (92 aa).

This sequence belongs to the universal ribosomal protein uS19 family.

The protein localises to the plastid. The protein resides in the chloroplast. Functionally, protein S19 forms a complex with S13 that binds strongly to the 16S ribosomal RNA. The protein is Small ribosomal subunit protein uS19c of Piper cenocladum (Ant piper).